A 387-amino-acid chain; its full sequence is Alanine racemase (387 aa).

K38 functions as the Proton acceptor; specific for D-alanine in the catalytic mechanism. Position 38 is an N6-(pyridoxal phosphate)lysine (K38). R136 serves as a coordination point for substrate. Residue Y267 is the Proton acceptor; specific for L-alanine of the active site. Residue M315 coordinates substrate.

It belongs to the alanine racemase family. It depends on pyridoxal 5'-phosphate as a cofactor.

It carries out the reaction L-alanine = D-alanine. Its pathway is amino-acid biosynthesis; D-alanine biosynthesis; D-alanine from L-alanine: step 1/1. Its function is as follows. Catalyzes the interconversion of L-alanine and D-alanine. May also act on other amino acids. This chain is Alanine racemase (alr), found in Clostridium novyi (strain NT).